The following is a 447-amino-acid chain: MIKIKKGLNLPIAGRPEQAVYDGPAITEVALLGEEYAGMRPSMKVKEGDAVKKGQVLFEDKKNPGVVFTAPASGKIAAIHRGEKRVLQSVVIAVEGNDEIEFERYAPEALANLSGEEVRRNLIQSGLWTALRTRPFSKIPAVDAEPFAIFVNAMDTNPLAADPTVIIKEAAEDFKRGLLVLSRLTERKIHVCKAAGADVPSENAANIETHEFGGPHPAGLSGTHIHFIEPVGANKTVWTINYQDVITIGRLFATGRLNTERVIALGGSQVNKPRLLRTVLGAKVSQITAGELVDTDNRVISGSVLNGAITQGAHDYLGRYHNQISVIEEGRSKELFGWVAPQPDKYSITRTTLGHFLKNKLFKFNTAVNGGDRAMVPIGTYERVMPLDILPTLLLRDLIVGDTDSAQALGCLELDEEDLALCSFVCPGKYEYGPLLRKVLETIEKEG.

The protein belongs to the NqrA family. Composed of six subunits; NqrA, NqrB, NqrC, NqrD, NqrE and NqrF.

It catalyses the reaction a ubiquinone + n Na(+)(in) + NADH + H(+) = a ubiquinol + n Na(+)(out) + NAD(+). Functionally, NQR complex catalyzes the reduction of ubiquinone-1 to ubiquinol by two successive reactions, coupled with the transport of Na(+) ions from the cytoplasm to the periplasm. NqrA to NqrE are probably involved in the second step, the conversion of ubisemiquinone to ubiquinol. The chain is Na(+)-translocating NADH-quinone reductase subunit A from Neisseria meningitidis serogroup B (strain ATCC BAA-335 / MC58).